We begin with the raw amino-acid sequence, 237 residues long: CD209 antigen-like protein D (237 aa).

Topologically, residues 1 to 54 (MSDSMESKTQQVVIPEDEECLMSGTRYSDISSRLQTKFGIKSLAEYTKQSRNPL) are cytoplasmic. Residues 55–75 (VLQLLSFLFLAGLLLIILILV) form a helical; Signal-anchor for type II membrane protein membrane-spanning segment. Residues 76 to 237 (SKVPSSEVQN…KVSTSSCTTK (162 aa)) are Extracellular-facing. A disulfide bridge links Cys106 with Cys117. In terms of domain architecture, C-type lectin spans 112–227 (FFNGSCYFFS…CDKLLFWICK (116 aa)). N-linked (GlcNAc...) asparagine glycosylation is found at Asn114 and Asn129. 2 cysteine pairs are disulfide-bonded: Cys134–Cys226 and Cys205–Cys218. Ca(2+) contacts are provided by Glu196, Asn198, Glu203, Asn214, and Asp215.

It localises to the membrane. In terms of biological role, probable pathogen-recognition receptor. May mediate the endocytosis of pathogens which are subsequently degraded in lysosomal compartments. May recognize in a calcium-dependent manner high mannose N-linked oligosaccharides in a variety of pathogen antigens. This Mus musculus (Mouse) protein is CD209 antigen-like protein D (Cd209d).